We begin with the raw amino-acid sequence, 423 residues long: Serine--tRNA ligase 2 (423 aa).

231-233 (TAE) provides a ligand contact to L-serine. 262–264 (RSE) serves as a coordination point for ATP. L-serine is bound at residue Glu285. 349–352 (EISS) contacts ATP. Position 384 (Ser384) interacts with L-serine.

It belongs to the class-II aminoacyl-tRNA synthetase family. Type-1 seryl-tRNA synthetase subfamily. As to quaternary structure, homodimer. The tRNA molecule binds across the dimer.

The protein resides in the cytoplasm. The catalysed reaction is tRNA(Ser) + L-serine + ATP = L-seryl-tRNA(Ser) + AMP + diphosphate + H(+). It carries out the reaction tRNA(Sec) + L-serine + ATP = L-seryl-tRNA(Sec) + AMP + diphosphate + H(+). The protein operates within aminoacyl-tRNA biosynthesis; selenocysteinyl-tRNA(Sec) biosynthesis; L-seryl-tRNA(Sec) from L-serine and tRNA(Sec): step 1/1. Catalyzes the attachment of serine to tRNA(Ser). Is also able to aminoacylate tRNA(Sec) with serine, to form the misacylated tRNA L-seryl-tRNA(Sec), which will be further converted into selenocysteinyl-tRNA(Sec). The sequence is that of Serine--tRNA ligase 2 from Enterococcus faecalis (strain ATCC 700802 / V583).